The chain runs to 278 residues: HTH-type transcriptional activator RhaS (278 aa).

An HTH araC/xylS-type domain is found at 174–272 (NLLLAWLEDH…NWSPRDIRQG (99 aa)). 2 DNA-binding regions (H-T-H motif) span residues 191–212 (DAVA…KQQT) and 239–262 (VTDI…RREF).

Binds DNA as a dimer.

It localises to the cytoplasm. In terms of biological role, activates expression of the rhaBAD and rhaT operons. This Escherichia coli O139:H28 (strain E24377A / ETEC) protein is HTH-type transcriptional activator RhaS.